A 299-amino-acid chain; its full sequence is MHCGPPDMVCETKIVATEDHEALPGAKKDALLAAAGAMWPPLPAAPGPAAAPPPAAGPQPHGGTGGAGPPEGRGVCIREFRAAEQEAARRIFYDGILERIPNTAFRGLRQHPRTQLLYALLAALCFAVTRSLLLTCLVPAGLLALRYYYSRKVILAYLECALHTDMADIEQYYMKPPGSCFWVAVLDGNVVGIVAARAHEEDNTVELLRMSVDSRFRGKGIAKALGRRVLEFAMLHNYSAVVLGTTAVKVAAHKLYESLGFRHMGASDHYVLPGMTLSLAERLFFQVRYHRYRLQLREE.

Residues 44 to 57 are compositionally biased toward pro residues; sequence AAPGPAAAPPPAAG. Residues 44–70 form a disordered region; it reads AAPGPAAAPPPAAGPQPHGGTGGAGPP. Residues 60 to 70 show a composition bias toward gly residues; sequence PHGGTGGAGPP. The helical transmembrane segment at 118 to 138 threads the bilayer; sequence YALLAALCFAVTRSLLLTCLV. The N-acetyltransferase domain occupies 143–280; that stretch reads LALRYYYSRK…VLPGMTLSLA (138 aa).

It belongs to the NAT8 family. In terms of tissue distribution, expressed in brain, including in mesencephalic dopaminergic neurons of the substantia nigra and ventral tegmental area and oligodendrocytes. Expressed in cortical pyramidal neurons and granule cells of the hippocampus (at protein level).

The protein localises to the cytoplasm. It localises to the microsome membrane. Its subcellular location is the mitochondrion membrane. It is found in the endoplasmic reticulum membrane. It carries out the reaction L-aspartate + acetyl-CoA = N-acetyl-L-aspartate + CoA + H(+). Its activity is regulated as follows. Aminooxyacetic acid (AOAA) blocks its activity in both cytoplasm and mitochondria. Functionally, catalyzes the synthesis of N-acetylaspartate acid (NAA) from L-aspartate and acetyl-CoA. Promotes dopamine uptake by regulating TNF-alpha expression. Attenuates methamphetamine-induced inhibition of dopamine uptake. This Rattus norvegicus (Rat) protein is N-acetylaspartate synthetase (Nat8l).